The chain runs to 436 residues: MTLKIDIKGRGKYKPASDYSIDDVKNVLMEKIFEESSRIINSDDDLEIIEKVDFRTDKINVLSLFSGCGGLDLGFELAGLAAVIGEQAAMEAFKDKDRFNELRNKSIFHTIYTNDLFKEANQTYKTNFPGHVIQHEKDIRQVKYFPKCNLILGGFPCPGFSEAGPRLIDDDRNFLYLHFIRSLIQAQPEIFVAENVKGMMTLGKGEVLNQIIEDFASAGYRVQFKLLNARDYGVPQLRERVIIEGVRKDISFNYKYPSPTHGEETGLKPFKTLRDSIGDLVTDPGPYFTGSYSSIYMSRNRKKSWDEQSFTIQASGRQAPLHPGGLSMKKIGKDKWVFPDGEENHRRLSVKEIARVQTFPDWFQFSQGTNSQTSINNRLDKQYKQIGNAVPVLLAKAVASPIANWAINYLESSPNNKIKNRERKLSIRTFLRIKTS.

The SAM-dependent MTase C5-type domain maps to 59–409 (INVLSLFSGC…SPIANWAINY (351 aa)). Cys-157 is an active-site residue.

The protein belongs to the class I-like SAM-binding methyltransferase superfamily. C5-methyltransferase family. Monomer.

The enzyme catalyses a 2'-deoxycytidine in DNA + S-adenosyl-L-methionine = a 5-methyl-2'-deoxycytidine in DNA + S-adenosyl-L-homocysteine + H(+). In terms of biological role, a methylase, recognizes the double-stranded sequence 5'-GGCC-3', methylates C-3 on both strands, and protects the DNA from cleavage by the BsuRI endonuclease. The polypeptide is Type II methyltransferase M.BsuRI (hsdRM) (Bacillus subtilis).